Here is a 301-residue protein sequence, read N- to C-terminus: Aspartate carbamoyltransferase catalytic subunit (301 aa).

Residues arginine 46 and threonine 47 each coordinate carbamoyl phosphate. L-aspartate is bound at residue lysine 74. Carbamoyl phosphate is bound by residues arginine 96, histidine 124, and glutamine 127. The L-aspartate site is built by arginine 157 and arginine 208. The carbamoyl phosphate site is built by alanine 249 and proline 250.

This sequence belongs to the aspartate/ornithine carbamoyltransferase superfamily. ATCase family. In terms of assembly, heterododecamer (2C3:3R2) of six catalytic PyrB chains organized as two trimers (C3), and six regulatory PyrI chains organized as three dimers (R2).

The enzyme catalyses carbamoyl phosphate + L-aspartate = N-carbamoyl-L-aspartate + phosphate + H(+). It participates in pyrimidine metabolism; UMP biosynthesis via de novo pathway; (S)-dihydroorotate from bicarbonate: step 2/3. Catalyzes the condensation of carbamoyl phosphate and aspartate to form carbamoyl aspartate and inorganic phosphate, the committed step in the de novo pyrimidine nucleotide biosynthesis pathway. This Bacillus cereus (strain ATCC 14579 / DSM 31 / CCUG 7414 / JCM 2152 / NBRC 15305 / NCIMB 9373 / NCTC 2599 / NRRL B-3711) protein is Aspartate carbamoyltransferase catalytic subunit.